The primary structure comprises 513 residues: MQPDPNPAAAPAALIELTGVSKRFPGVQALDDCRFDLRAGEVHALMGENGAGKSTLMKILAGVYQKDGGEIRMDGRAVEIDDPRAAQALGIGIIHQELNLMNHLSVAQNIFIGREPRGRFGVFVDEDKLNRDAAAIFARMRLDLDPRTLVGRLTVAKQQMVEIAKALSFDSRVLIMDEPTAALNNAEIAELFRIIGELRAHGVGIVYISHKMDELRQIADRVTVMRDGKYVATVPMAGTSMDAIIAMMVGRQLDTEFRTPPDTSANDVALEVRGLSRGRAIRDVGFTLRRGEILGFAGLMGAGRTEVARAVFGADPVDAGEIRVHGKTVTIRTPADAVAHGIGYLSEDRKHFGLAVGMDVQNNIALSSMRRFVRRGLFLDARQMRDTAQSYVRQLAIRTPSVAQPARLLSGGNQQKIVIAKWLLRDCDILFFDEPTRGIDVGAKSEIYKLLDALAAEGKAIVMISSELPEVLRMSHRILVMCEGRVTGELRAADATQEKIMQLATQRESTVLS.

ABC transporter domains are found at residues 15–252 and 263–508; these read IELT…VGRQ and TSAN…TQRE. 47–54 serves as a coordination point for ATP; that stretch reads GENGAGKS.

It belongs to the ABC transporter superfamily. Carbohydrate importer 2 (CUT2) (TC 3.A.1.2) family.

The protein resides in the cell inner membrane. The enzyme catalyses D-ribose(out) + ATP + H2O = D-ribose(in) + ADP + phosphate + H(+). It catalyses the reaction D-galactose(out) + ATP + H2O = D-galactose(in) + ADP + phosphate + H(+). Its function is as follows. Part of an ABC transporter complex involved in carbohydrate import. Could be involved in ribose, galactose and/or methyl galactoside import. Responsible for energy coupling to the transport system. The chain is Putative ribose/galactose/methyl galactoside import ATP-binding protein 3 from Burkholderia ambifaria (strain ATCC BAA-244 / DSM 16087 / CCUG 44356 / LMG 19182 / AMMD) (Burkholderia cepacia (strain AMMD)).